The sequence spans 386 residues: Succinate--CoA ligase [ADP-forming] subunit beta (386 aa).

Positions 9–244 (KAVLRSYGVS…LDEEDAKEIE (236 aa)) constitute an ATP-grasp domain. ATP is bound by residues Lys46, 53 to 55 (GRG), Glu99, Cys102, and Glu107. Residues Asn199 and Asp213 each contribute to the Mg(2+) site. Residues Asn264 and 321–323 (GIM) each bind substrate.

It belongs to the succinate/malate CoA ligase beta subunit family. As to quaternary structure, heterotetramer of two alpha and two beta subunits. Mg(2+) serves as cofactor.

The enzyme catalyses succinate + ATP + CoA = succinyl-CoA + ADP + phosphate. It carries out the reaction GTP + succinate + CoA = succinyl-CoA + GDP + phosphate. Its pathway is carbohydrate metabolism; tricarboxylic acid cycle; succinate from succinyl-CoA (ligase route): step 1/1. Its function is as follows. Succinyl-CoA synthetase functions in the citric acid cycle (TCA), coupling the hydrolysis of succinyl-CoA to the synthesis of either ATP or GTP and thus represents the only step of substrate-level phosphorylation in the TCA. The beta subunit provides nucleotide specificity of the enzyme and binds the substrate succinate, while the binding sites for coenzyme A and phosphate are found in the alpha subunit. In Bacillus anthracis (strain A0248), this protein is Succinate--CoA ligase [ADP-forming] subunit beta.